A 165-amino-acid polypeptide reads, in one-letter code: NADPH-dependent 7-cyano-7-deazaguanine reductase (165 aa).

Cys56 acts as the Thioimide intermediate in catalysis. Asp63 functions as the Proton donor in the catalytic mechanism. Substrate-binding positions include 78–80 (VES) and 97–98 (HE).

This sequence belongs to the GTP cyclohydrolase I family. QueF type 1 subfamily.

The protein localises to the cytoplasm. It carries out the reaction 7-aminomethyl-7-carbaguanine + 2 NADP(+) = 7-cyano-7-deazaguanine + 2 NADPH + 3 H(+). It participates in tRNA modification; tRNA-queuosine biosynthesis. Catalyzes the NADPH-dependent reduction of 7-cyano-7-deazaguanine (preQ0) to 7-aminomethyl-7-deazaguanine (preQ1). The polypeptide is NADPH-dependent 7-cyano-7-deazaguanine reductase (Bacillus anthracis (strain A0248)).